Here is a 350-residue protein sequence, read N- to C-terminus: Phosphatidylinositol transfer protein PDR17 (350 aa).

The CRAL-TRIO domain maps to 139-297; the sequence is KVAVENETGK…LYNGLLDFKY (159 aa).

Interacts with phosphatidylserine decarboxylase PSD2. Also interacts with PBI1.

It is found in the cytoplasm. Its subcellular location is the microsome. The enzyme catalyses a 1,2-diacyl-sn-glycero-3-phospho-(1D-myo-inositol)(in) = a 1,2-diacyl-sn-glycero-3-phospho-(1D-myo-inositol)(out). Its function is as follows. Has phosphatidylinositol transfer activity. Involved in the regulation of the phospholipid composition of plasma- and endomembranes. Altering plasma membrane composition may provide a possible mechanism for multidrug resistance. Contributes to efficient phospholipase D1 activation and phospholipase B1 inhibition in the regulation of phospholipid turnover. Forms a complex with phosphatidylserine decarboxylase PSD2 that seems essential for maintenance of vacuolar phosphatidylethanolamine (PE) levels. Allows interorganelle phosphatidylserine (PtdSer) transport via a process that involves the acceptor membrane complex PDR17-PDS2 that binds to PBI1 which in turn ligates to SCS2 and phosphatidic acid present in the donor membrane, forming a zone of apposition that facilitates PtdSer transfer. This chain is Phosphatidylinositol transfer protein PDR17, found in Saccharomyces cerevisiae (strain ATCC 204508 / S288c) (Baker's yeast).